We begin with the raw amino-acid sequence, 140 residues long: Small ribosomal subunit protein eS17y (140 aa).

It belongs to the eukaryotic ribosomal protein eS17 family.

The chain is Small ribosomal subunit protein eS17y (RPS17B) from Arabidopsis thaliana (Mouse-ear cress).